The following is a 394-amino-acid chain: Protein TsgA homolog (394 aa).

A run of 12 helical transmembrane segments spans residues Trp11 to Leu31, Phe51 to Pro71, Leu76 to Leu96, Leu101 to Ile121, Leu135 to Ile155, Tyr163 to Phe183, Leu205 to Ile225, Ser245 to Leu265, Ile273 to Asp293, Trp299 to Gly319, Phe333 to Val353, and Leu362 to Val382.

The protein belongs to the major facilitator superfamily. TsgA family.

It is found in the cell inner membrane. The protein is Protein TsgA homolog of Erwinia tasmaniensis (strain DSM 17950 / CFBP 7177 / CIP 109463 / NCPPB 4357 / Et1/99).